The sequence spans 338 residues: TPR repeat-containing protein MJ0941 (338 aa).

8 TPR repeats span residues 27-62, 63-96, 97-130, 131-164, 165-198, 199-232, 268-301, and 302-335; these read LEAVANVLRAYRELFEGNLIKALYYVDKALELEPDF, YLALFLKGLALSAKGEIKEAITTFEELLSYESKN, PITWVFVGQLYGMSGNCDEALKCYNKALGIENRF, LSAFLLKTICLEFLGEYDELLKCYNEVLTYTPNF, VPMWVKKAEILRKLGRYEDALLCLNRALELKPHD, KNALYLKGVLLKRMGKFREALECFKKLIDELNVK, VALWYFKGELYERLGKLDEALKCYEKVIELQPHY, and IKALLSKARIYERQGNIEAAIEYYNKAVENIHKD.

The sequence is that of TPR repeat-containing protein MJ0941 from Methanocaldococcus jannaschii (strain ATCC 43067 / DSM 2661 / JAL-1 / JCM 10045 / NBRC 100440) (Methanococcus jannaschii).